The sequence spans 626 residues: Carnitine O-acetyltransferase (626 aa).

Lys-93 bears the N6-succinyllysine mark. An N6-acetyllysine; alternate modification is found at Lys-261. The residue at position 261 (Lys-261) is an N6-succinyllysine; alternate. Lys-268 is modified (N6-acetyllysine). His-343 (proton acceptor) is an active-site residue. Residues Lys-419 and 423-430 each bind CoA; that span reads KSEKLSPD. (R)-carnitine is bound by residues Tyr-452 and Ser-454. Ser-456 is a CoA binding site. Thr-465 is a (R)-carnitine binding site. CoA is bound by residues Arg-504 and Gln-555. The Microbody targeting signal signature appears at 624–626; sequence AKL.

Belongs to the carnitine/choline acetyltransferase family. As to quaternary structure, monomer. As to expression, mostly in skeletal muscle, less in heart, liver and pancreas, only weakly detectable in brain, placenta, lung and kidney.

It is found in the endoplasmic reticulum. The protein resides in the peroxisome. Its subcellular location is the mitochondrion inner membrane. The protein localises to the mitochondrion. The catalysed reaction is (R)-carnitine + acetyl-CoA = O-acetyl-(R)-carnitine + CoA. It carries out the reaction propanoyl-CoA + (R)-carnitine = O-propanoyl-(R)-carnitine + CoA. The enzyme catalyses butanoyl-CoA + (R)-carnitine = O-butanoyl-(R)-carnitine + CoA. It catalyses the reaction hexanoyl-CoA + (R)-carnitine = O-hexanoyl-(R)-carnitine + CoA. The catalysed reaction is octanoyl-CoA + (R)-carnitine = O-octanoyl-(R)-carnitine + CoA. It carries out the reaction decanoyl-CoA + (R)-carnitine = O-decanoyl-(R)-carnitine + CoA. The enzyme catalyses 3-methylbutanoyl-CoA + (R)-carnitine = O-3-methylbutanoyl-(R)-carnitine + CoA. It catalyses the reaction 2-methylpropanoyl-CoA + (R)-carnitine = O-isobutanoyl-(R)-carnitine + CoA. The catalysed reaction is 2-methylbutanoyl-CoA + (R)-carnitine = O-2-methylbutanoyl-(R)-carnitine + CoA. It carries out the reaction acetoacetyl-CoA + (R)-carnitine = O-3-oxobutanoyl-(R)-carnitine + CoA. The enzyme catalyses 3-hydroxybutanoyl-CoA + (R)-carnitine = O-3-hydroxybutanoyl-(R)-carnitine + CoA. It catalyses the reaction 4,8-dimethylnonanoyl-CoA + (R)-carnitine = O-4,8-dimethylnonanoyl-(R)-carnitine + CoA. The catalysed reaction is 2,6-dimethylheptanoyl-CoA + (R)-carnitine = O-2,6-dimethylheptanoyl-(R)-carnitine + CoA. Functionally, catalyzes the reversible transfer of acyl groups from carnitine to coenzyme A (CoA) and regulates the acyl-CoA/CoA ratio. Also plays a crucial role in the transport of fatty acids for beta-oxidation. Responsible for the synthesis of short- and branched-chain acylcarnitines. Active towards some branched-chain amino acid oxidation pathway (BCAAO) intermediates. Trans-2-enoyl-CoAs and 2-methylacyl-CoAs are poor substrates. The chain is Carnitine O-acetyltransferase from Homo sapiens (Human).